We begin with the raw amino-acid sequence, 91 residues long: MANNPGAKKAIRKIARRTEVNTARRSRVRTFLRKFEDAIAKGDVAVAKAAFVEAQSELMRAVSKGVVHPNTGSRKVSRLAARLKKLDKAAA.

Belongs to the bacterial ribosomal protein bS20 family.

Its function is as follows. Binds directly to 16S ribosomal RNA. This chain is Small ribosomal subunit protein bS20, found in Caulobacter vibrioides (strain ATCC 19089 / CIP 103742 / CB 15) (Caulobacter crescentus).